The following is a 186-amino-acid chain: uncharacterized protein (186 aa).

A run of 4 helical transmembrane segments spans residues 5–25 (LIAC…FEDI), 39–59 (IITI…KLFA), 62–82 (NLLF…ILLF), and 122–142 (GFFE…IALM).

The protein resides in the cell membrane. This is an uncharacterized protein from Borreliella burgdorferi (strain ATCC 35210 / DSM 4680 / CIP 102532 / B31) (Borrelia burgdorferi).